We begin with the raw amino-acid sequence, 865 residues long: MRGILKKISQINFGLMSPEDIRKMSVAQIVTPDTYDEDGYPIENELMDPRLGVIGSSLRCRSCGAKGGECPGHFGSINLARPVIHVGFADTIHKILSSICRKCSRILLTETEIQDYRQRILEAMEREESLTPIIKEIYAEARRDRCPHCEEEQEEIKLDKPVSIVEGDYKLTPSEVRERLERITDNDSLLLGVNPEVARPEWMVLTVLPVPPVTVRPSITLETGERSEDDLTHKLVDILRINQRLKENMEAGAPQLIVEDLWELLQYHVTTYFDNEASGVPPARHRSGRPLKTLAQRLKGKEGRFRSNLSGKRVNFSARTVVSPDPNVSVNEVGVPELIAKEVTVPVYVTEWNIDRMKEHIENGPDVHPGANYVIRPDGRKIRAYNETKDVVLENLKPGYIVERHLKDGDIVLFNRQPSLHRMSMMAHEVRVLPYKTFRLNLCVCPPYNADFDGDEMNMHVFQTEESRAEAKTLMRVQDHILSPRFRDLSSGVYTTISQEHTSSQGKRLFSVRSRPPDPQEGRAPPPDREGREWTVKEIFSMVLPDDLNMVYLAEICRKCDECLEMDWENDAYVVIENGQLITGVIDEKAYGAFAGKILDQIVKEYGSDAAKEFLDSATKLAIAGIMHAGFTTSTNDEEIPEEAKERIEAHLRNAEARVDQLIEAYENGELEPLPGRSLEETLEMKIMQVLGEAKDKSGEIAESYFDMDENHAVIMALTGARGAMLNLTQITACVGQQSVHGGRITRGYDNRTLPHFKKGELGAKSRGFVHSSYKEDSILLEFMGGREGLVDTAIRTAQSGYMQRRLVNALQDLTVDENGRVVDNRGVIIQTRFGEDGVDPAKSDYGKIVDLDKLVQEIRLKSGK.

Residues Cys60, Cys63, Cys70, His73, Cys100, Cys103, Cys146, and Cys149 each contribute to the Zn(2+) site. 3 residues coordinate Mg(2+): Asp451, Asp453, and Asp455. Residues 500–531 form a disordered region; it reads EHTSSQGKRLFSVRSRPPDPQEGRAPPPDREG. Positions 515–531 are enriched in basic and acidic residues; sequence RPPDPQEGRAPPPDREG.

The protein belongs to the RNA polymerase beta' chain family. As to quaternary structure, part of the RNA polymerase complex. The cofactor is Mg(2+). Zn(2+) serves as cofactor.

It is found in the cytoplasm. The catalysed reaction is RNA(n) + a ribonucleoside 5'-triphosphate = RNA(n+1) + diphosphate. Its function is as follows. DNA-dependent RNA polymerase (RNAP) catalyzes the transcription of DNA into RNA using the four ribonucleoside triphosphates as substrates. Forms the clamp head domain. The polypeptide is DNA-directed RNA polymerase subunit Rpo1N (Methanothermobacter thermautotrophicus (strain Winter) (Methanobacterium thermoautotrophicum)).